The primary structure comprises 361 residues: 1D-myo-inositol 2-acetamido-2-deoxy-alpha-D-glucopyranoside deacetylase (361 aa).

Residues 1 to 12 (MTTTPQPPPQPD) show a composition bias toward pro residues. The segment at 1-27 (MTTTPQPPPQPDETPEGAAGAATAGRD) is disordered. Over residues 16–25 (EGAAGAATAG) the composition is skewed to low complexity. Residues H66, D69, and H207 each contribute to the Zn(2+) site.

This sequence belongs to the MshB deacetylase family. Zn(2+) is required as a cofactor.

The catalysed reaction is 1D-myo-inositol 2-acetamido-2-deoxy-alpha-D-glucopyranoside + H2O = 1D-myo-inositol 2-amino-2-deoxy-alpha-D-glucopyranoside + acetate. In terms of biological role, catalyzes the deacetylation of 1D-myo-inositol 2-acetamido-2-deoxy-alpha-D-glucopyranoside (GlcNAc-Ins) in the mycothiol biosynthesis pathway. This is 1D-myo-inositol 2-acetamido-2-deoxy-alpha-D-glucopyranoside deacetylase from Kineococcus radiotolerans (strain ATCC BAA-149 / DSM 14245 / SRS30216).